Here is a 329-residue protein sequence, read N- to C-terminus: Phosphoenolpyruvate transferase (329 aa).

A 7,8-didemethyl-8-hydroxy-5-deazariboflavin-binding site is contributed by Asp61.

This sequence belongs to the CofD family. As to quaternary structure, homodimer. Mg(2+) is required as a cofactor.

It carries out the reaction enolpyruvoyl-2-diphospho-5'-guanosine + 7,8-didemethyl-8-hydroxy-5-deazariboflavin = dehydro coenzyme F420-0 + GMP + H(+). The protein operates within cofactor biosynthesis; coenzyme F420 biosynthesis. Functionally, catalyzes the transfer of the phosphoenolpyruvate moiety from enoylpyruvoyl-2-diphospho-5'-guanosine (EPPG) to 7,8-didemethyl-8-hydroxy-5-deazariboflavin (FO) with the formation of dehydro coenzyme F420-0 and GMP. The sequence is that of Phosphoenolpyruvate transferase from Mycobacterium marinum (strain ATCC BAA-535 / M).